The chain runs to 58 residues: MLFWVLIFFIIAVIAALFGFTGIAAASAGIAKILFFIFLVLFVISLIAMLVRGRRPKL.

2 helical membrane-spanning segments follow: residues 3–23 and 30–50; these read FWVLIFFIIAVIAALFGFTGI and IAKILFFIFLVLFVISLIAML.

This sequence belongs to the UPF0391 family.

Its subcellular location is the cell membrane. This chain is UPF0391 membrane protein COXBURSA331_A2131, found in Coxiella burnetii (strain RSA 331 / Henzerling II).